The primary structure comprises 653 residues: Fructose-1,6-bisphosphatase class 3 2 (653 aa).

Belongs to the FBPase class 3 family. Mn(2+) serves as cofactor.

The enzyme catalyses beta-D-fructose 1,6-bisphosphate + H2O = beta-D-fructose 6-phosphate + phosphate. The protein operates within carbohydrate biosynthesis; gluconeogenesis. The sequence is that of Fructose-1,6-bisphosphatase class 3 2 from Clostridium beijerinckii (strain ATCC 51743 / NCIMB 8052) (Clostridium acetobutylicum).